Consider the following 90-residue polypeptide: MARTVHCIKLGVDAEGLDFPPYPGELGKRIFEGVSKQAWADWLKHQTMLVNENRLNLADARARQYLARQMENHFFGGGADAAAGYVPPTA.

Belongs to the Fe(2+)-trafficking protein family.

In terms of biological role, could be a mediator in iron transactions between iron acquisition and iron-requiring processes, such as synthesis and/or repair of Fe-S clusters in biosynthetic enzymes. The sequence is that of Probable Fe(2+)-trafficking protein from Delftia acidovorans (strain DSM 14801 / SPH-1).